We begin with the raw amino-acid sequence, 356 residues long: MRVVVAGGGTAGHIEPALAVAEALRDKHGATVSALGTARGLETTLVPDRGFELHLIEPVPVPRKPNMDLLKLPFRVAKALGQARKALKDTDAQAVIGFGGYVSAPAYMAAKSLGLPFFVHEANARAGMANKLGVKLGGVGLNAVAGSGMDGDVVGIPIRAVLSGARDESAADRARDTWGLDKDRQTIFVTGGSQGSVSINKAVEQAVDQLVEAGFQVLHAVGKKNELPAAKPGYHPVPFIDDMQAAYTVADLIVCRSGAMTVAEVTAAGVPAIYVPLPHGNGEQALNAQAVIKAGAARQIDDADFTAQTLIDATLDILLHPSTHQSMSDAAKTSTAGNASTVIADMIAATINSQHN.

UDP-N-acetyl-alpha-D-glucosamine contacts are provided by residues 10-12 (TAG), Asn123, Arg159, Ser193, Ile240, and Gln284.

It belongs to the glycosyltransferase 28 family. MurG subfamily.

The protein localises to the cell membrane. It carries out the reaction di-trans,octa-cis-undecaprenyl diphospho-N-acetyl-alpha-D-muramoyl-L-alanyl-D-glutamyl-meso-2,6-diaminopimeloyl-D-alanyl-D-alanine + UDP-N-acetyl-alpha-D-glucosamine = di-trans,octa-cis-undecaprenyl diphospho-[N-acetyl-alpha-D-glucosaminyl-(1-&gt;4)]-N-acetyl-alpha-D-muramoyl-L-alanyl-D-glutamyl-meso-2,6-diaminopimeloyl-D-alanyl-D-alanine + UDP + H(+). It participates in cell wall biogenesis; peptidoglycan biosynthesis. Cell wall formation. Catalyzes the transfer of a GlcNAc subunit on undecaprenyl-pyrophosphoryl-MurNAc-pentapeptide (lipid intermediate I) to form undecaprenyl-pyrophosphoryl-MurNAc-(pentapeptide)GlcNAc (lipid intermediate II). The polypeptide is UDP-N-acetylglucosamine--N-acetylmuramyl-(pentapeptide) pyrophosphoryl-undecaprenol N-acetylglucosamine transferase (Corynebacterium glutamicum (strain ATCC 13032 / DSM 20300 / JCM 1318 / BCRC 11384 / CCUG 27702 / LMG 3730 / NBRC 12168 / NCIMB 10025 / NRRL B-2784 / 534)).